A 638-amino-acid polypeptide reads, in one-letter code: Chaperone protein HtpG (638 aa).

The interval 1–344 (MQKKETLEFQ…SNDLPLNVSR (344 aa)) is a; substrate-binding. A b region spans residues 345 to 560 (EILQNNENIY…ENDITTQMSK (216 aa)). The c stretch occupies residues 561-638 (LLISTGQESP…LLLSNIIRLN (78 aa)).

Belongs to the heat shock protein 90 family. As to quaternary structure, homodimer.

It is found in the cytoplasm. Molecular chaperone. Has ATPase activity. The protein is Chaperone protein HtpG of Wigglesworthia glossinidia brevipalpis.